Consider the following 779-residue polypeptide: ATP-dependent RNA helicase SUPV3L1, mitochondrial (779 aa).

Residues 1-40 (MSLPRCTLLWARLPAGRGAGPRAAPCSALRALVGSFPGAS) constitute a mitochondrion transit peptide. K99 is modified (N6-acetyllysine). The 141-residue stretch at 194–334 (EARARQRKII…AINLVSELLY (141 aa)) folds into the Helicase ATP-binding domain. 207-214 (GPTNSGKT) contacts ATP. The Helicase C-terminal domain occupies 353–521 (VLDHALESLD…PTAEQIEMFA (169 aa)). Residues 650–779 (PDSSLVRSLQ…RRKKKDPDSD (130 aa)) form an interaction with LAMTOR5, important for protein stability region. Residues 693–703 (SGDQSRLSGAS) are compositionally biased toward polar residues. Disordered regions lie at residues 693 to 732 (SGDQ…KELP) and 754 to 779 (EWLT…PDSD). Position 725 is a phosphoserine (S725). The span at 761 to 779 (EHSREKVGTRRKKKDPDSD) shows a compositional bias: basic and acidic residues.

It belongs to the helicase family. As to quaternary structure, homodimer; in free form. Component of the mitochondrial degradosome (mtEXO) complex which is a heteropentamer containing 2 copies of SUPV3L1 and 3 copies of PNPT1. As part of mitochondrial degradosome complex, interacts with GRSF1 in a RNA-dependent manner; the interaction enhances the activity of the complex. Interacts with LAMTOR5/HBXIP, WRN and BLM. It depends on Mg(2+) as a cofactor. Requires Mn(2+) as cofactor.

It is found in the nucleus. The protein resides in the mitochondrion matrix. Its subcellular location is the mitochondrion nucleoid. It carries out the reaction ATP + H2O = ADP + phosphate + H(+). Its activity is regulated as follows. Helicase activity toward DNA substrate is inhibited by micromolar concentrations of 5,6-dichloro-1-(beta-D-ribofuranosyl)benzotriazole (DRBT) and 4,5,6,7-tetrabromobenzotriazole (TBBT). Helicase activity toward RNA substrate is inhibited by elevated concentrations of TBBT. Inhibited by some ring-expanded nucleoside analogs. Functionally, major helicase player in mitochondrial RNA metabolism. Component of the mitochondrial degradosome (mtEXO) complex, that degrades 3' overhang double-stranded RNA with a 3'-to-5' directionality in an ATP-dependent manner. Involved in the degradation of non-coding mitochondrial transcripts (MT-ncRNA) and tRNA-like molecules. ATPase and ATP-dependent multisubstrate helicase, able to unwind double-stranded (ds) DNA and RNA, and RNA/DNA heteroduplexes in the 5'-to-3' direction. Plays a role in the RNA surveillance system in mitochondria; regulates the stability of mature mRNAs, the removal of aberrantly formed mRNAs and the rapid degradation of non coding processing intermediates. Also implicated in recombination and chromatin maintenance pathways. May protect cells from apoptosis. Associates with mitochondrial DNA. This is ATP-dependent RNA helicase SUPV3L1, mitochondrial (Supv3l1) from Mus musculus (Mouse).